A 300-amino-acid chain; its full sequence is Acetaldehyde dehydrogenase (300 aa).

10–13 lines the NAD(+) pocket; it reads SGNI. Cys-129 functions as the Acyl-thioester intermediate in the catalytic mechanism. Residues 160–168 and Asn-271 each bind NAD(+); that span reads SAGPGTRKN.

This sequence belongs to the acetaldehyde dehydrogenase family.

It catalyses the reaction acetaldehyde + NAD(+) + CoA = acetyl-CoA + NADH + H(+). In Alkalilimnicola ehrlichii (strain ATCC BAA-1101 / DSM 17681 / MLHE-1), this protein is Acetaldehyde dehydrogenase.